Here is a 366-residue protein sequence, read N- to C-terminus: Molybdenum import ATP-binding protein ModC (366 aa).

The 231-residue stretch at Met-1–Ser-231 folds into the ABC transporter domain. Gly-33–Thr-40 provides a ligand contact to ATP. A Mop domain is found at Ala-292–Asp-361.

This sequence belongs to the ABC transporter superfamily. Molybdate importer (TC 3.A.1.8) family. As to quaternary structure, the complex is composed of two ATP-binding proteins (ModC), two transmembrane proteins (ModB) and a solute-binding protein (ModA).

The protein localises to the cell inner membrane. It catalyses the reaction molybdate(out) + ATP + H2O = molybdate(in) + ADP + phosphate + H(+). Its function is as follows. Part of the ABC transporter complex ModABC involved in molybdenum import. Responsible for energy coupling to the transport system. The protein is Molybdenum import ATP-binding protein ModC of Vibrio cholerae serotype O1 (strain ATCC 39315 / El Tor Inaba N16961).